The chain runs to 21 residues: M-lycotoxin-Ls4a (21 aa).

Leu21 carries the leucine amide modification.

In terms of tissue distribution, expressed by the venom gland.

The protein localises to the secreted. Its function is as follows. May inhibit growth of bacteria. The polypeptide is M-lycotoxin-Ls4a (Lycosa singoriensis (Wolf spider)).